A 554-amino-acid chain; its full sequence is Potassium-transporting ATPase potassium-binding subunit (554 aa).

A run of 12 helical transmembrane segments spans residues 1 to 21 (MSSQ…LALA), 59 to 79 (WPAY…FLYL), 131 to 151 (GLAV…VALV), 174 to 194 (VRIL…AGAI), 246 to 266 (PNPL…FALT), 279 to 299 (GYAI…LMMW), 323 to 343 (FGIA…TGAV), 352 to 372 (GFGG…PGGV), 375 to 395 (GLYG…LMVG), 412 to 432 (FAAC…AVAM), 481 to 501 (IGIA…ALAG), and 525 to 545 (GLLV…ALAL).

Belongs to the KdpA family. The system is composed of three essential subunits: KdpA, KdpB and KdpC.

The protein resides in the cell membrane. Functionally, part of the high-affinity ATP-driven potassium transport (or Kdp) system, which catalyzes the hydrolysis of ATP coupled with the electrogenic transport of potassium into the cytoplasm. This subunit binds the extracellular potassium ions and delivers the ions to the membrane domain of KdpB through an intramembrane tunnel. This is Potassium-transporting ATPase potassium-binding subunit from Streptomyces griseus subsp. griseus (strain JCM 4626 / CBS 651.72 / NBRC 13350 / KCC S-0626 / ISP 5235).